Consider the following 201-residue polypeptide: UPF0056 membrane protein PH0760 (201 aa).

6 helical membrane-spanning segments follow: residues 8 to 28 (FMILYTGMFAITNPIGAVPVF), 49 to 69 (ITVFITLTVFALVGQWIFKFF), 73 to 93 (IDAFAIAGGILLFRMGMEMLS), 111 to 131 (VAVIPLAIPLISGPGAITTVM), 140 to 160 (GIVILTIIAIGLTTYGILYSG), and 181 to 201 (LILTSMAMQMIINGIKGAFGI).

This sequence belongs to the UPF0056 (MarC) family.

The protein localises to the cell membrane. The polypeptide is UPF0056 membrane protein PH0760 (Pyrococcus horikoshii (strain ATCC 700860 / DSM 12428 / JCM 9974 / NBRC 100139 / OT-3)).